Consider the following 156-residue polypeptide: Large ribosomal subunit protein uL22 (156 aa).

The disordered stretch occupies residues 114 to 156; that stretch reads VESRPKQEKGGKAGASKASSRAARAQGSKAAAAKKTESKGGTS. A compositionally biased stretch (low complexity) spans 127–146; it reads GASKASSRAARAQGSKAAAA. Positions 147 to 156 are enriched in basic and acidic residues; it reads KKTESKGGTS.

Belongs to the universal ribosomal protein uL22 family. In terms of assembly, part of the 50S ribosomal subunit.

Functionally, this protein binds specifically to 23S rRNA; its binding is stimulated by other ribosomal proteins, e.g. L4, L17, and L20. It is important during the early stages of 50S assembly. It makes multiple contacts with different domains of the 23S rRNA in the assembled 50S subunit and ribosome. Its function is as follows. The globular domain of the protein is located near the polypeptide exit tunnel on the outside of the subunit, while an extended beta-hairpin is found that lines the wall of the exit tunnel in the center of the 70S ribosome. This is Large ribosomal subunit protein uL22 from Mycobacteroides abscessus (strain ATCC 19977 / DSM 44196 / CCUG 20993 / CIP 104536 / JCM 13569 / NCTC 13031 / TMC 1543 / L948) (Mycobacterium abscessus).